The following is a 322-amino-acid chain: Breast cancer metastasis-suppressor 1-like protein (322 aa).

The segment covering Met-1–Met-16 has biased composition (basic and acidic residues). The segment at Met-1–Arg-56 is disordered. Positions Glu-17 to Asp-51 are enriched in acidic residues. Coiled coils occupy residues Glu-50–Glu-99 and Glu-147–Glu-178.

Belongs to the BRMS1 family.

It is found in the nucleus. Involved in the histone deacetylase (HDAC1)-dependent transcriptional repression activity. This Xenopus laevis (African clawed frog) protein is Breast cancer metastasis-suppressor 1-like protein (brms1l).